A 696-amino-acid polypeptide reads, in one-letter code: Methionine--tRNA ligase (696 aa).

The 'HIGH' region signature appears at 12-22; that stretch reads PYANGAIHLGH. Cysteine 143, cysteine 146, cysteine 156, and cysteine 159 together coordinate Zn(2+). The 'KMSKS' region motif lies at 336–340; it reads KMSKS. Position 339 (lysine 339) interacts with ATP. The segment at 556-580 is disordered; that stretch reads SLAPAPEAQSQQRHAEHQQNEVTAE. The tRNA-binding domain occupies 591–696; the sequence is DFMKVDLRIV…SGAQPGMRVK (106 aa).

It belongs to the class-I aminoacyl-tRNA synthetase family. MetG type 1 subfamily. In terms of assembly, homodimer. The cofactor is Zn(2+).

The protein resides in the cytoplasm. The enzyme catalyses tRNA(Met) + L-methionine + ATP = L-methionyl-tRNA(Met) + AMP + diphosphate. Its function is as follows. Is required not only for elongation of protein synthesis but also for the initiation of all mRNA translation through initiator tRNA(fMet) aminoacylation. The protein is Methionine--tRNA ligase of Dechloromonas aromatica (strain RCB).